The following is a 229-amino-acid chain: Orotidine 5'-phosphate decarboxylase (229 aa).

Residues Asp-10, Lys-32, 59–68, Thr-119, Arg-180, Gln-189, Gly-209, and Arg-210 each bind substrate; that span reads DLKFHDIPNT. The active-site Proton donor is Lys-61.

It belongs to the OMP decarboxylase family. Type 1 subfamily. As to quaternary structure, homodimer.

The enzyme catalyses orotidine 5'-phosphate + H(+) = UMP + CO2. It participates in pyrimidine metabolism; UMP biosynthesis via de novo pathway; UMP from orotate: step 2/2. Catalyzes the decarboxylation of orotidine 5'-monophosphate (OMP) to uridine 5'-monophosphate (UMP). The sequence is that of Orotidine 5'-phosphate decarboxylase from Legionella pneumophila (strain Lens).